The sequence spans 116 residues: NADH-quinone oxidoreductase subunit A (116 aa).

3 consecutive transmembrane segments (helical) span residues 3–23 (FTFLVVVLLTALAFVGVVIAL), 61–81 (FAILFLMFDVETAFLFPWAVV), and 88–108 (QGLVSILFFFIILVLGLAYAW).

It belongs to the complex I subunit 3 family. As to quaternary structure, NDH-1 is composed of 14 different subunits. Subunits NuoA, H, J, K, L, M, N constitute the membrane sector of the complex.

The protein localises to the cell inner membrane. The catalysed reaction is a quinone + NADH + 5 H(+)(in) = a quinol + NAD(+) + 4 H(+)(out). NDH-1 shuttles electrons from NADH, via FMN and iron-sulfur (Fe-S) centers, to quinones in the respiratory chain. The immediate electron acceptor for the enzyme in this species is believed to be a menaquinone. Couples the redox reaction to proton translocation (for every two electrons transferred, four hydrogen ions are translocated across the cytoplasmic membrane), and thus conserves the redox energy in a proton gradient. The sequence is that of NADH-quinone oxidoreductase subunit A from Bacteroides thetaiotaomicron (strain ATCC 29148 / DSM 2079 / JCM 5827 / CCUG 10774 / NCTC 10582 / VPI-5482 / E50).